Consider the following 484-residue polypeptide: Aspartyl/glutamyl-tRNA(Asn/Gln) amidotransferase subunit B (484 aa).

This sequence belongs to the GatB/GatE family. GatB subfamily. Heterotrimer of A, B and C subunits.

It catalyses the reaction L-glutamyl-tRNA(Gln) + L-glutamine + ATP + H2O = L-glutaminyl-tRNA(Gln) + L-glutamate + ADP + phosphate + H(+). The enzyme catalyses L-aspartyl-tRNA(Asn) + L-glutamine + ATP + H2O = L-asparaginyl-tRNA(Asn) + L-glutamate + ADP + phosphate + 2 H(+). Allows the formation of correctly charged Asn-tRNA(Asn) or Gln-tRNA(Gln) through the transamidation of misacylated Asp-tRNA(Asn) or Glu-tRNA(Gln) in organisms which lack either or both of asparaginyl-tRNA or glutaminyl-tRNA synthetases. The reaction takes place in the presence of glutamine and ATP through an activated phospho-Asp-tRNA(Asn) or phospho-Glu-tRNA(Gln). The chain is Aspartyl/glutamyl-tRNA(Asn/Gln) amidotransferase subunit B from Anaeromyxobacter dehalogenans (strain 2CP-C).